Here is a 61-residue protein sequence, read N- to C-terminus: Small venom protein 1 (61 aa).

Residues 1 to 20 form the signal peptide; the sequence is MRCVAIFLVVICAFVLQALA.

As to expression, expressed by the venom gland.

It localises to the secreted. This chain is Small venom protein 1, found in Pimpla hypochondriaca (Parasitoid wasp).